The primary structure comprises 441 residues: MGKVVQLFTHPLELKAALKLKFLREPLYPADDTQGSAELKRCYQLLQRTSRSFAAVIMELHPELRNAVMLFYLILRALDTVEDDMTISPKVKVPLLREFDQKLKLDTWSFDGNAKTEKDRDVLVEFSTILAEFHKLKPEYQQVIADITHKMGNGMADYILDEKFNLSGLETIQDYDRYCHYVAGLVGDGLTHLIMLAKFSSPGLYYDSPDLYESMGLFLQKTNIIRDYAEDLADGRSFWPKEIWSHYADDLASFSKPENATAGVYCINHLVLNALGHVQHVLTYLASLREQSSFQFCAIPQVMAIATLALVFGNERVLQTSVKIRKGTTCYLILKSRTFQGCVEIFEHYLRDIRKRLTVADPNYLKLNIEIAKLDKFIEEMYQDKLPVGAKPQETEIYKKVRERSAYDLEVLPREQEEEFKFNVLLSILFTVFGALYWYAK.

2 consecutive transmembrane segments (helical) span residues 293–313 (SFQF…LVFG) and 420–440 (FKFN…YWYA).

The protein belongs to the phytoene/squalene synthase family. Mg(2+) is required as a cofactor.

Its subcellular location is the endoplasmic reticulum membrane. The enzyme catalyses 2 (2E,6E)-farnesyl diphosphate + NADPH + H(+) = squalene + 2 diphosphate + NADP(+). It carries out the reaction 2 (2E,6E)-farnesyl diphosphate + NADH + H(+) = squalene + 2 diphosphate + NAD(+). The protein operates within terpene metabolism; lanosterol biosynthesis; lanosterol from farnesyl diphosphate: step 1/3. In terms of biological role, catalyzes the condensation of 2 two farnesyl pyrophosphate moieties to form squalene. It is the first committed enzyme of the sterol biosynthesis pathway. Required for the biosynthesis of ergosterol. The polypeptide is Squalene synthase (ERG9) (Eremothecium gossypii (strain ATCC 10895 / CBS 109.51 / FGSC 9923 / NRRL Y-1056) (Yeast)).